Here is a 115-residue protein sequence, read N- to C-terminus: UPF0212 protein MJ0068 (115 aa).

It belongs to the UPF0212 family.

The sequence is that of UPF0212 protein MJ0068 from Methanocaldococcus jannaschii (strain ATCC 43067 / DSM 2661 / JAL-1 / JCM 10045 / NBRC 100440) (Methanococcus jannaschii).